The chain runs to 391 residues: MKTFLLLLLVLLELGQAPGALHRVPLSRRESLRKKLRAQGQLTELWKSQNLNMDQCSTIQSANEPLINYLDMEYFGTISIGSPPQNFTVIFDTGSSNLWVPSVYCTSPACQTHPVFHPSLSSTYREVGNSFSIQYGTGSLTGIIGADQVSVEGLTVVGQQFGESVQEPGKTFVHAEFDGILGLGYPSLAAGGVTPVFDNMMAQNLVALPMFSVYMSSNPGGSGSELTFGGYDPSHFSGSLNWVPVTKQAYWQIALDGIQVGDSVMFCSEGCQAIVDTGTSLITGPPGKIKQLQEALGATYVDEGYSVQCANLNMMLDVTFIINGVPYTLNPTAYTLLDFVDGMQVCSTGFEGLEIQPPAGPLWILGDVFIRQFYAVFDRGNNRVGLAPAVP.

The N-terminal stretch at 1–19 (MKTFLLLLLVLLELGQAPG) is a signal peptide. Positions 20-53 (ALHRVPLSRRESLRKKLRAQGQLTELWKSQNLNM) are cleaved as a propeptide — activation peptide. Residues 74–387 (YFGTISIGSP…DRGNNRVGLA (314 aa)) form the Peptidase A1 domain. Asn-86 carries an N-linked (GlcNAc...) asparagine glycan. Asp-92 is an active-site residue. Cystine bridges form between Cys-105–Cys-110 and Cys-267–Cys-271. The active site involves Asp-276. A disulfide bridge links Cys-309 with Cys-346.

It belongs to the peptidase A1 family. As to quaternary structure, homodimer; disulfide-linked. In terms of processing, glycosylated. The nature of the carbohydrate chain varies between cell types. Expressed abundantly in the surface and foveolar epithelial cells of the fundic and pyloric stomach mucosa, and at very low levels in the spleen.

Its subcellular location is the endosome. It carries out the reaction Similar to cathepsin D, but slightly broader specificity.. Functionally, may have a role in immune function. Probably involved in the processing of antigenic peptides during MHC class II-mediated antigen presentation. May play a role in activation-induced lymphocyte depletion in the thymus, and in neuronal degeneration and glial cell activation in the brain. The protein is Cathepsin E (CTSE) of Cavia porcellus (Guinea pig).